The primary structure comprises 166 residues: Small ribosomal subunit protein uS5 (166 aa).

Positions 11–74 constitute an S5 DRBM domain; the sequence is LQEKLIAVNR…EKARRNMMNV (64 aa).

This sequence belongs to the universal ribosomal protein uS5 family. In terms of assembly, part of the 30S ribosomal subunit. Contacts proteins S4 and S8.

In terms of biological role, with S4 and S12 plays an important role in translational accuracy. Located at the back of the 30S subunit body where it stabilizes the conformation of the head with respect to the body. In Pectobacterium atrosepticum (strain SCRI 1043 / ATCC BAA-672) (Erwinia carotovora subsp. atroseptica), this protein is Small ribosomal subunit protein uS5.